We begin with the raw amino-acid sequence, 126 residues long: Aspartate 1-decarboxylase (126 aa).

Catalysis depends on Ser25, which acts as the Schiff-base intermediate with substrate; via pyruvic acid. Ser25 is modified (pyruvic acid (Ser)). Residue Thr57 participates in substrate binding. The active-site Proton donor is Tyr58. Residue 73–75 participates in substrate binding; the sequence is GAA.

It belongs to the PanD family. As to quaternary structure, heterooctamer of four alpha and four beta subunits. It depends on pyruvate as a cofactor. Is synthesized initially as an inactive proenzyme, which is activated by self-cleavage at a specific serine bond to produce a beta-subunit with a hydroxyl group at its C-terminus and an alpha-subunit with a pyruvoyl group at its N-terminus.

It is found in the cytoplasm. The enzyme catalyses L-aspartate + H(+) = beta-alanine + CO2. It functions in the pathway cofactor biosynthesis; (R)-pantothenate biosynthesis; beta-alanine from L-aspartate: step 1/1. Its function is as follows. Catalyzes the pyruvoyl-dependent decarboxylation of aspartate to produce beta-alanine. In Escherichia coli O6:H1 (strain CFT073 / ATCC 700928 / UPEC), this protein is Aspartate 1-decarboxylase.